The following is a 484-amino-acid chain: Tubulin-like protein TubZ (484 aa).

Position 32 to 33 (32 to 33) interacts with GTP; sequence QK. Residue D64 coordinates Mg(2+). Residues 140-142, N213, K237, and N241 contribute to the GTP site; that span reads GVG. A required to bind TubR-DNA complex region spans residues 408-484; it reads RKQDEEKVDI…LKTSNPFKKR (77 aa). Residues 428-484 form a disordered region; it reads TFNPYNKNQGFGGASRFSGGKNSAFKRQTSEATSTQNQQEEENIISTLKTSNPFKKR. Residues 452–484 show a composition bias toward polar residues; sequence FKRQTSEATSTQNQQEEENIISTLKTSNPFKKR.

This sequence belongs to the FtsZ family. TubZ subfamily. As to quaternary structure, forms filaments; a 2-stranded filament forms with the non-hydrolyzable GTP-gamma-S which is probably a precursor to the 4-stranded filament that forms in the presence of GTP. The 4-stranded form binds GDP. In vivo polymerizes to form dynamic filaments that often extend from one cell pole to the other, moving in a unidirectional manner. Filaments polymerize at the plus end and depolymerize at the minus end, a process called treadmilling. Polymerization only occurs above a critical concentration, it does not require upstream tubR. The tubC DNA-TubR complex binds to TubZ. Mg(2+) is required as a cofactor.

It is found in the cytoplasm. It carries out the reaction GTP + H2O = GDP + phosphate + H(+). Its activity is regulated as follows. GTPase is inhibited by GTP-gamma-S, which also stabilizes filaments. In terms of biological role, a tubulin-like, filament forming GTPase; the motor component of the type III plasmid partition system which ensures correct segregation of the pBtoxis plasmid. Filaments may seed from the centromere-like site (tubC) when bound by DNA-binding protein TubR; the tubC-TubR complex stabilizes the TubZ filament. Filaments grow at the plus end and depolymerize at the minus end, a process called treadmilling. TubR-tubC complexes track the depolymerizing minus end of the filament, probably pulling plasmid within the cell. Required for pBtoxis plasmid replication/partition. Binds the TubR-tubC complex; GTP is not required for binding to TubR-tubC. TubZ alone does not bind DNA. Has a high GTPase activity in the presence of Mg(2+); in the presence of GTP assembles into dynamic filaments which upon polymerization bind almost exclusively GDP. Filament formation is cooperative, requiring a critical concentration. Formation occurs very quickly and is followed by disassembly as GTP is consumed. This Bacillus thuringiensis subsp. israelensis protein is Tubulin-like protein TubZ.